The sequence spans 369 residues: Anhydro-N-acetylmuramic acid kinase (369 aa).

12–19 (GTSMDGVD) is a binding site for ATP.

It belongs to the anhydro-N-acetylmuramic acid kinase family.

It carries out the reaction 1,6-anhydro-N-acetyl-beta-muramate + ATP + H2O = N-acetyl-D-muramate 6-phosphate + ADP + H(+). Its pathway is amino-sugar metabolism; 1,6-anhydro-N-acetylmuramate degradation. The protein operates within cell wall biogenesis; peptidoglycan recycling. Functionally, catalyzes the specific phosphorylation of 1,6-anhydro-N-acetylmuramic acid (anhMurNAc) with the simultaneous cleavage of the 1,6-anhydro ring, generating MurNAc-6-P. Is required for the utilization of anhMurNAc either imported from the medium or derived from its own cell wall murein, and thus plays a role in cell wall recycling. This chain is Anhydro-N-acetylmuramic acid kinase, found in Shewanella loihica (strain ATCC BAA-1088 / PV-4).